Consider the following 123-residue polypeptide: Glucose starvation-inducible protein B (123 aa).

Composition is skewed to basic and acidic residues over residues 1 to 29 (MADNNKMSREEAGRKGGETTSKNHDKEFY) and 41 to 109 (SKNH…KEFY). The segment at 1–123 (MADNNKMSRE…SKGGNARNND (123 aa)) is disordered. 5 tandem repeats follow at residues 13–32 (GRKGGETTSKNHDKEFYQEI), 33–52 (GQKGGEATSKNHDKEFYQEI), 53–72 (GEKGGEATSKNHDKEFYQEI), 73–92 (GEKGGEATSENHDKEFYQEI), and 93–112 (GRKGGEATSKNHDKEFYQEI). A 5 X 20 AA approximate tandem repeats region spans residues 13-120 (GRKGGETTSK…EIGSKGGNAR (108 aa)).

Involved in an adaptive response to nutrient deprivation other than sporulation. This is Glucose starvation-inducible protein B (gsiB) from Bacillus subtilis (strain 168).